The sequence spans 480 residues: Methylenetetrahydrofolate--tRNA-(uracil-5-)-methyltransferase TrmFO (480 aa).

15–20 contributes to the FAD binding site; sequence GGGLAG.

This sequence belongs to the MnmG family. TrmFO subfamily. It depends on FAD as a cofactor.

It localises to the cytoplasm. It catalyses the reaction uridine(54) in tRNA + (6R)-5,10-methylene-5,6,7,8-tetrahydrofolate + NADH + H(+) = 5-methyluridine(54) in tRNA + (6S)-5,6,7,8-tetrahydrofolate + NAD(+). The enzyme catalyses uridine(54) in tRNA + (6R)-5,10-methylene-5,6,7,8-tetrahydrofolate + NADPH + H(+) = 5-methyluridine(54) in tRNA + (6S)-5,6,7,8-tetrahydrofolate + NADP(+). Its function is as follows. Catalyzes the folate-dependent formation of 5-methyl-uridine at position 54 (M-5-U54) in all tRNAs. This Sinorhizobium medicae (strain WSM419) (Ensifer medicae) protein is Methylenetetrahydrofolate--tRNA-(uracil-5-)-methyltransferase TrmFO.